Reading from the N-terminus, the 507-residue chain is ATP synthase subunit alpha, chloroplastic (507 aa).

Residue 170 to 177 coordinates ATP; sequence GDRQTGKT. At Thr257 the chain carries Phosphothreonine.

Belongs to the ATPase alpha/beta chains family. As to quaternary structure, F-type ATPases have 2 components, CF(1) - the catalytic core - and CF(0) - the membrane proton channel. CF(1) has five subunits: alpha(3), beta(3), gamma(1), delta(1), epsilon(1). CF(0) has four main subunits: a, b, b' and c.

It localises to the plastid. Its subcellular location is the chloroplast thylakoid membrane. It catalyses the reaction ATP + H2O + 4 H(+)(in) = ADP + phosphate + 5 H(+)(out). Functionally, produces ATP from ADP in the presence of a proton gradient across the membrane. The alpha chain is a regulatory subunit. In Lepidium virginicum (Virginia pepperweed), this protein is ATP synthase subunit alpha, chloroplastic.